The chain runs to 397 residues: Enoyl-[acyl-carrier-protein] reductase [NADH] (397 aa).

NAD(+) contacts are provided by residues 48–53, 74–75, 111–112, and 139–140; these read GASTGY, FE, DA, and LA. Y225 is a binding site for substrate. Y235 functions as the Proton donor in the catalytic mechanism. NAD(+) is bound by residues K244 and 273–275; that span reads VVT.

This sequence belongs to the TER reductase family. As to quaternary structure, monomer.

The enzyme catalyses a 2,3-saturated acyl-[ACP] + NAD(+) = a (2E)-enoyl-[ACP] + NADH + H(+). It functions in the pathway lipid metabolism; fatty acid biosynthesis. Its function is as follows. Involved in the final reduction of the elongation cycle of fatty acid synthesis (FAS II). Catalyzes the reduction of a carbon-carbon double bond in an enoyl moiety that is covalently linked to an acyl carrier protein (ACP). The protein is Enoyl-[acyl-carrier-protein] reductase [NADH] of Pseudoalteromonas translucida (strain TAC 125).